The following is a 669-amino-acid chain: Glycine--tRNA ligase beta subunit (669 aa).

The protein belongs to the class-II aminoacyl-tRNA synthetase family. In terms of assembly, tetramer of two alpha and two beta subunits.

Its subcellular location is the cytoplasm. The catalysed reaction is tRNA(Gly) + glycine + ATP = glycyl-tRNA(Gly) + AMP + diphosphate. The polypeptide is Glycine--tRNA ligase beta subunit (Phenylobacterium zucineum (strain HLK1)).